A 447-amino-acid chain; its full sequence is 2-oxoadipate dioxygenase/decarboxylase (447 aa).

Residues histidine 68, arginine 72, and histidine 224 each coordinate 2-oxoadipate. Histidine 68 is a binding site for Fe(2+). The Fe(2+) site is built by histidine 224 and glutamate 290. Valine 391 contacts 2-oxoadipate.

It belongs to the 2-oxoadipate dioxygenase/decarboxylase family. Fe(2+) serves as cofactor.

The catalysed reaction is 2-oxoadipate + O2 = (R)-2-hydroxyglutarate + CO2. Its function is as follows. Catalyzes the decarboxylation and hydroxylation of 2-oxoadipate (2OA) to form D-2-hydroxyglutarate (D-2-HGA). In Shigella flexneri, this protein is 2-oxoadipate dioxygenase/decarboxylase.